The primary structure comprises 233 residues: Purine nucleoside phosphorylase DeoD-type (233 aa).

An a purine D-ribonucleoside-binding site is contributed by H4. Phosphate contacts are provided by residues G20, R24, R43, and 87-90 (RIGT). Residues 179-181 (EME) and 203-204 (SD) contribute to the a purine D-ribonucleoside site. The active-site Proton donor is D204.

It belongs to the PNP/UDP phosphorylase family. In terms of assembly, homohexamer; trimer of homodimers.

It carries out the reaction a purine D-ribonucleoside + phosphate = a purine nucleobase + alpha-D-ribose 1-phosphate. The catalysed reaction is a purine 2'-deoxy-D-ribonucleoside + phosphate = a purine nucleobase + 2-deoxy-alpha-D-ribose 1-phosphate. In terms of biological role, catalyzes the reversible phosphorolytic breakdown of the N-glycosidic bond in the beta-(deoxy)ribonucleoside molecules, with the formation of the corresponding free purine bases and pentose-1-phosphate. The protein is Purine nucleoside phosphorylase DeoD-type of Helicobacter pylori (strain P12).